The primary structure comprises 446 residues: Elongation factor 1-alpha (446 aa).

A tr-type G domain is found at 5–230 (KNHLNLVVIG…DALDQPKRPK (226 aa)). A G1 region spans residues 14–21 (GHVDSGKS). 14–21 (GHVDSGKS) lines the GTP pocket. Positions 70-74 (GITID) are G2. Residues 91–94 (DAPG) form a G3 region. GTP-binding positions include 91-95 (DAPGH) and 153-156 (NKMD). Residues 153–156 (NKMD) are G4. Residues 194–196 (SGW) are G5.

Belongs to the TRAFAC class translation factor GTPase superfamily. Classic translation factor GTPase family. EF-Tu/EF-1A subfamily.

Its subcellular location is the cytoplasm. This protein promotes the GTP-dependent binding of aminoacyl-tRNA to the A-site of ribosomes during protein biosynthesis. The protein is Elongation factor 1-alpha (EFAA) of Stylonychia lemnae (Ciliate).